The chain runs to 880 residues: DNA gyrase subunit A (880 aa).

The Topo IIA-type catalytic domain maps to Leu35–Leu530. Tyr123 functions as the O-(5'-phospho-DNA)-tyrosine intermediate in the catalytic mechanism. The short motif at Gln557–Gly563 is the GyrA-box element.

It belongs to the type II topoisomerase GyrA/ParC subunit family. Heterotetramer, composed of two GyrA and two GyrB chains. In the heterotetramer, GyrA contains the active site tyrosine that forms a transient covalent intermediate with DNA, while GyrB binds cofactors and catalyzes ATP hydrolysis.

The protein localises to the cytoplasm. The enzyme catalyses ATP-dependent breakage, passage and rejoining of double-stranded DNA.. In terms of biological role, a type II topoisomerase that negatively supercoils closed circular double-stranded (ds) DNA in an ATP-dependent manner to modulate DNA topology and maintain chromosomes in an underwound state. Negative supercoiling favors strand separation, and DNA replication, transcription, recombination and repair, all of which involve strand separation. Also able to catalyze the interconversion of other topological isomers of dsDNA rings, including catenanes and knotted rings. Type II topoisomerases break and join 2 DNA strands simultaneously in an ATP-dependent manner. The polypeptide is DNA gyrase subunit A (Haemophilus influenzae (strain ATCC 51907 / DSM 11121 / KW20 / Rd)).